The sequence spans 540 residues: Transcription initiation factor IIF subunit alpha (540 aa).

Positions 1-26 (MDSQETKVFENVKQENPDEKKPKVEE) are enriched in basic and acidic residues. Disordered regions lie at residues 1–39 (MDSQETKVFENVKQENPDEKKPKVEEPDSQNNASTQSQQ) and 70–106 (IDPSKSFVPPIKMQRRDPNAPSSSNGEQNAEQGSSSN). 2 stretches are compositionally biased toward polar residues: residues 29 to 39 (SQNNASTQSQQ) and 89 to 106 (APSSSNGEQNAEQGSSSN). Residues S259 and S261 each carry the phosphoserine modification. Residues 280–382 (MEGNEEDNKK…REEKLKSRFS (103 aa)) adopt a coiled-coil conformation. The disordered stretch occupies residues 341–416 (YESDEEDEDP…SSQLQSPNTS (76 aa)). The span at 359 to 369 (SEEEVLQEEEE) shows a compositional bias: acidic residues. Residues 381–416 (FSANASKTNTPRPLERTPSSVSPVKASSQLQSPNTS) show a composition bias toward polar residues. Position 399 is a phosphoserine (S399).

It belongs to the TFIIF alpha subunit family. As to quaternary structure, component of the fcp1/TFIIF/polII complex via interaction of tfg3 with both tfg1/TFIIF-alpha and tfg2/TFIIF-beta subunits.

It localises to the nucleus. Its function is as follows. TFIIF is a general transcription initiation factor that binds to RNA polymerase II and helps to recruit it to the initiation complex in collaboration with TFIIB. It promotes transcription elongation. The sequence is that of Transcription initiation factor IIF subunit alpha (tfg1) from Schizosaccharomyces pombe (strain 972 / ATCC 24843) (Fission yeast).